The chain runs to 461 residues: Serine--tRNA ligase (461 aa).

The tract at residues Glu112–Phe134 is disordered. Residues Pro114–Phe134 show a composition bias toward basic and acidic residues. L-serine is bound at residue Thr252–Glu254. Arg283 to Glu285 contacts ATP. Glu306 provides a ligand contact to L-serine. Position 370 to 373 (Glu370 to Ser373) interacts with ATP. Position 406 (Ser406) interacts with L-serine.

It belongs to the class-II aminoacyl-tRNA synthetase family. Type-1 seryl-tRNA synthetase subfamily. Homodimer. The tRNA molecule binds across the dimer.

The protein localises to the cytoplasm. The enzyme catalyses tRNA(Ser) + L-serine + ATP = L-seryl-tRNA(Ser) + AMP + diphosphate + H(+). It catalyses the reaction tRNA(Sec) + L-serine + ATP = L-seryl-tRNA(Sec) + AMP + diphosphate + H(+). It functions in the pathway aminoacyl-tRNA biosynthesis; selenocysteinyl-tRNA(Sec) biosynthesis; L-seryl-tRNA(Sec) from L-serine and tRNA(Sec): step 1/1. In terms of biological role, catalyzes the attachment of serine to tRNA(Ser). Is also able to aminoacylate tRNA(Sec) with serine, to form the misacylated tRNA L-seryl-tRNA(Sec), which will be further converted into selenocysteinyl-tRNA(Sec). The polypeptide is Serine--tRNA ligase (Methylocella silvestris (strain DSM 15510 / CIP 108128 / LMG 27833 / NCIMB 13906 / BL2)).